Consider the following 485-residue polypeptide: Membrane-bound lytic murein transglycosylase F (485 aa).

A signal peptide spans 1–29 (MFAHTALRQRCAKWLFATGLFLLLGACVE). Residues 30 to 267 (KPSTLERVKE…RLKDRYYGHV (238 aa)) are non-LT domain. The LT domain stretch occupies residues 268 to 485 (DVLGYVGAYT…DKPADQSPPM (218 aa)). Residue glutamate 314 is part of the active site. The segment at 465-485 (EGNLHVPGVNKDKPADQSPPM) is disordered.

The protein in the N-terminal section; belongs to the bacterial solute-binding protein 3 family. In the C-terminal section; belongs to the transglycosylase Slt family.

The protein resides in the cell outer membrane. The catalysed reaction is Exolytic cleavage of the (1-&gt;4)-beta-glycosidic linkage between N-acetylmuramic acid (MurNAc) and N-acetylglucosamine (GlcNAc) residues in peptidoglycan, from either the reducing or the non-reducing ends of the peptidoglycan chains, with concomitant formation of a 1,6-anhydrobond in the MurNAc residue.. In terms of biological role, murein-degrading enzyme that degrades murein glycan strands and insoluble, high-molecular weight murein sacculi, with the concomitant formation of a 1,6-anhydromuramoyl product. Lytic transglycosylases (LTs) play an integral role in the metabolism of the peptidoglycan (PG) sacculus. Their lytic action creates space within the PG sacculus to allow for its expansion as well as for the insertion of various structures such as secretion systems and flagella. The chain is Membrane-bound lytic murein transglycosylase F from Pseudomonas putida (strain GB-1).